A 413-amino-acid chain; its full sequence is Interferon-inducible GTPase 1 (413 aa).

Residue Gly-2 is the site of N-myristoyl glycine attachment. Residues 68–250 form the IRG-type G domain; it reads SVLNVAVTGE…PVLMDKLISD (183 aa). GDP is bound by residues Gly-79, Gly-81, Lys-82, Ser-83, Ser-84, Thr-102, and Gly-103. Thr-102 is subject to (Microbial infection) Phosphothreonine; by ROP18. (Microbial infection) Phosphothreonine; by ROP18 is present on Thr-108. The GDP site is built by Lys-184, Asp-186, Ser-187, and Asn-232. Cys-236 and Cys-410 are oxidised to a cystine.

Belongs to the TRAFAC class dynamin-like GTPase superfamily. IRG family. In terms of assembly, monomer, as apoenzyme and in the GDP-bound form. Homooligomer, upon GTP binding. Interacts with HOOK3. As to quaternary structure, (Microbial infection) Interacts with Toxoplasma gondii GRA7 in GTP-dependent manner; the interaction results in faster turnover of the GTP-activated IIGP1 oligomer. Interacts with T.gondii ROP5; the interaction results in inhibition of IRGA6/IIGP1 GTPase activity and oligomerization. Post-translationally, myristoylated. (Microbial infection) Phosphorylated by Toxoplasma gondii ROP18 from virulent strains.

Its subcellular location is the cytoplasm. The protein resides in the nucleus membrane. It localises to the endoplasmic reticulum membrane. The protein localises to the golgi apparatus. It is found in the golgi stack membrane. Its subcellular location is the parasitophorous vacuole membrane. It catalyses the reaction GTP + H2O = GDP + phosphate + H(+). Functionally, GTPase with low activity. Has higher affinity for GDP than for GTP. Plays a role in resistance to intracellular pathogens. During infection with avirulent Toxoplasma gondii strains, recruited to the parasitophorous vacuole membrane. Required for disruption of the parasitophorous vacuole formed following T.gondii infection and subsequent killing of the parasite. Mediates resistance to Chlamydia trachomatis infection by targeting bacterial inclusions to autophagosomes for subsequent lysosomal destruction. The sequence is that of Interferon-inducible GTPase 1 (Iigp1) from Mus musculus (Mouse).